We begin with the raw amino-acid sequence, 389 residues long: NAD-dependent protein deacetylase sirtuin-2 (389 aa).

The disordered stretch occupies residues 1-34 (MAEPDPSHPLETQAGKVQEAQDSDSDSEGGAAGG). The residue at position 2 (Ala2) is an N-acetylalanine. Ser23, Ser25, and Ser27 each carry phosphoserine. Positions 41-51 (LRNLFSQTLSL) match the Nuclear export signal motif. Ser53 carries the phosphoserine modification. The Deacetylase sirtuin-type domain occupies 57 to 338 (RLLDELTLEG…LALAELLGWK (282 aa)). NAD(+) contacts are provided by residues 85-89 (AGIST) and 95-97 (DFR). Position 100 is a phosphoserine (Ser100). 167-170 (QNID) serves as a coordination point for NAD(+). His187 serves as the catalytic Proton acceptor. 2 residues coordinate Zn(2+): Cys195 and Cys200. A Phosphoserine modification is found at Ser207. Positions 221 and 224 each coordinate Zn(2+). NAD(+)-binding positions include 262-263 (TS), 286-288 (NKE), and Cys324. The interval 351-389 (SIDAQSGAGVPNPSTSASPKKSPPPAKDEARTTEREKPQ) is disordered. Residues 361–370 (PNPSTSASPK) show a composition bias toward low complexity. A Phosphoserine; by CDK2 and CDK5 modification is found at Ser368. A Phosphoserine modification is found at Ser372. The segment covering 376-389 (AKDEARTTEREKPQ) has biased composition (basic and acidic residues).

It belongs to the sirtuin family. Class I subfamily. As to quaternary structure, interacts with CDC20, FOXO3 and FZR1. Associates with microtubules in primary cortical mature neurons. Homotrimer. Isoform 1 and isoform 2 interact (via both phosphorylated, unphosphorylated, active or inactive forms) with HDAC6; the interaction is necessary for the complex to interact with alpha-tubulin, suggesting that these proteins belong to a large complex that deacetylates the cytoskeleton. Interacts with FOXO1; the interaction is disrupted upon serum-starvation or oxidative stress, leading to increased level of acetylated FOXO1 and induction of autophagy. Interacts with RELA; the interaction occurs in the cytoplasm and is increased in a TNF-alpha-dependent manner. Interacts with HOXA10; the interaction is direct. Interacts with YWHAB and YWHAG; the interactions occur in a AKT-dependent manner and increase SIRT2-dependent TP53 deacetylation. Interacts with MAPK1/ERK2 and MAPK3/ERK1; the interactions increase SIRT2 stability and deacetylation activity. Interacts (phosphorylated form) with KMT5A isoform 2; the interaction is direct, stimulates KMT5A-mediated methyltransferase activity on histone at 'Lys-20' (H4K20me1) and is increased in a H(2)O(2)-induced oxidative stress-dependent manner. Interacts with G6PD; the interaction is enhanced by H(2)O(2) treatment. Interacts with a G1/S-specific cyclin E-CDK2 complex. Interacts with AURKA, CDK5R1 (p35 form) and CDK5 and HIF1A. Isoform 1, isoform 2 and isoform 5 interact (via C-terminus region) with EP300. Interacts with the tRNA ligase SARS1; recruited to the VEGFA promoter via interaction with SARS1. Interacts with BEX4; negatively regulates alpha-tubulin deacetylation by SIRT2. Zn(2+) serves as cofactor. Phosphorylated at phosphoserine and phosphothreonine. Phosphorylated at Ser-368 by a mitotic kinase CDK1/cyclin B at the G2/M transition; phosphorylation regulates the delay in cell-cycle progression. Phosphorylated at Ser-368 by a mitotic kinase G1/S-specific cyclin E/Cdk2 complex; phosphorylation inactivates SIRT2-mediated alpha-tubulin deacetylation and thereby negatively regulates cell adhesion, cell migration and neurite outgrowth during neuronal differentiation. Phosphorylated by cyclin A/Cdk2 and p35-Cdk5 complexes and to a lesser extent by the cyclin D3/Cdk4 and cyclin B/Cdk1, in vitro. Dephosphorylated at Ser-368 by CDC14A and CDC14B around early anaphase. Post-translationally, acetylated by EP300; acetylation leads both to the decreased of SIRT2-mediated alpha-tubulin deacetylase activity and SIRT2-mediated down-regulation of TP53 transcriptional activity. In terms of processing, ubiquitinated. As to expression, isoform 1 is expressed in heart, liver and skeletal muscle, weakly expressed in the cortex. Isoform 2 is strongly expressed in the cortex, weakly expressed in heart and liver. Weakly expressed in several malignancies including breast, liver, brain, kidney and prostate cancers compared to normal tissues. Weakly expressed in glioma cell lines compared to normal brain tissues (at protein level). Widely expressed. Highly expressed in heart, brain and skeletal muscle, while it is weakly expressed in placenta and lung. Down-regulated in many gliomas suggesting that it may act as a tumor suppressor gene in human gliomas possibly through the regulation of microtubule network.

It is found in the nucleus. The protein localises to the cytoplasm. It localises to the perinuclear region. Its subcellular location is the cytoskeleton. The protein resides in the microtubule organizing center. It is found in the centrosome. The protein localises to the centriole. It localises to the spindle. Its subcellular location is the midbody. The protein resides in the chromosome. It is found in the perikaryon. The protein localises to the cell projection. It localises to the growth cone. Its subcellular location is the myelin membrane. The catalysed reaction is N(6)-acetyl-L-lysyl-[protein] + NAD(+) + H2O = 2''-O-acetyl-ADP-D-ribose + nicotinamide + L-lysyl-[protein]. It catalyses the reaction N(6)-tetradecanoyl-L-lysyl-[protein] + NAD(+) + H2O = 2''-O-tetradecanoyl-ADP-D-ribose + nicotinamide + L-lysyl-[protein]. The enzyme catalyses N(6)-hexadecanoyl-L-lysyl-[protein] + NAD(+) + H2O = 2''-O-hexadecanoyl-ADP-D-ribose + nicotinamide + L-lysyl-[protein]. With respect to regulation, inhibited by Sirtinol, A3 and M15 small molecules. Inhibited by nicotinamide. Inhibited by a macrocyclic peptide inhibitor S2iL5. Inhibited by EP300-induced acetylation. In terms of biological role, NAD-dependent protein deacetylase, which deacetylates internal lysines on histone and alpha-tubulin as well as many other proteins such as key transcription factors. Participates in the modulation of multiple and diverse biological processes such as cell cycle control, genomic integrity, microtubule dynamics, cell differentiation, metabolic networks, and autophagy. Plays a major role in the control of cell cycle progression and genomic stability. Functions in the antephase checkpoint preventing precocious mitotic entry in response to microtubule stress agents, and hence allowing proper inheritance of chromosomes. Positively regulates the anaphase promoting complex/cyclosome (APC/C) ubiquitin ligase complex activity by deacetylating CDC20 and FZR1, then allowing progression through mitosis. Associates both with chromatin at transcriptional start sites (TSSs) and enhancers of active genes. Plays a role in cell cycle and chromatin compaction through epigenetic modulation of the regulation of histone H4 'Lys-20' methylation (H4K20me1) during early mitosis. Specifically deacetylates histone H4 at 'Lys-16' (H4K16ac) between the G2/M transition and metaphase enabling H4K20me1 deposition by KMT5A leading to ulterior levels of H4K20me2 and H4K20me3 deposition throughout cell cycle, and mitotic S-phase progression. Deacetylates KMT5A modulating KMT5A chromatin localization during the mitotic stress response. Also deacetylates histone H3 at 'Lys-57' (H3K56ac) during the mitotic G2/M transition. Upon bacterium Listeria monocytogenes infection, deacetylates 'Lys-18' of histone H3 in a receptor tyrosine kinase MET- and PI3K/Akt-dependent manner, thereby inhibiting transcriptional activity and promoting late stages of listeria infection. During oocyte meiosis progression, may deacetylate histone H4 at 'Lys-16' (H4K16ac) and alpha-tubulin, regulating spindle assembly and chromosome alignment by influencing microtubule dynamics and kinetochore function. Deacetylates histone H4 at 'Lys-16' (H4K16ac) at the VEGFA promoter and thereby contributes to regulate expression of VEGFA, a key regulator of angiogenesis. Deacetylates alpha-tubulin at 'Lys-40' and hence controls neuronal motility, oligodendroglial cell arbor projection processes and proliferation of non-neuronal cells. Phosphorylation at Ser-368 by a G1/S-specific cyclin E-CDK2 complex inactivates SIRT2-mediated alpha-tubulin deacetylation, negatively regulating cell adhesion, cell migration and neurite outgrowth during neuronal differentiation. Deacetylates PARD3 and participates in the regulation of Schwann cell peripheral myelination formation during early postnatal development and during postinjury remyelination. Involved in several cellular metabolic pathways. Plays a role in the regulation of blood glucose homeostasis by deacetylating and stabilizing phosphoenolpyruvate carboxykinase PCK1 activity in response to low nutrient availability. Acts as a key regulator in the pentose phosphate pathway (PPP) by deacetylating and activating the glucose-6-phosphate G6PD enzyme, and therefore, stimulates the production of cytosolic NADPH to counteract oxidative damage. Maintains energy homeostasis in response to nutrient deprivation as well as energy expenditure by inhibiting adipogenesis and promoting lipolysis. Attenuates adipocyte differentiation by deacetylating and promoting FOXO1 interaction to PPARG and subsequent repression of PPARG-dependent transcriptional activity. Plays a role in the regulation of lysosome-mediated degradation of protein aggregates by autophagy in neuronal cells. Deacetylates FOXO1 in response to oxidative stress or serum deprivation, thereby negatively regulating FOXO1-mediated autophagy. Deacetylates a broad range of transcription factors and co-regulators regulating target gene expression. Deacetylates transcriptional factor FOXO3 stimulating the ubiquitin ligase SCF(SKP2)-mediated FOXO3 ubiquitination and degradation. Deacetylates HIF1A and therefore promotes HIF1A degradation and inhibition of HIF1A transcriptional activity in tumor cells in response to hypoxia. Deacetylates RELA in the cytoplasm inhibiting NF-kappaB-dependent transcription activation upon TNF-alpha stimulation. Inhibits transcriptional activation by deacetylating p53/TP53 and EP300. Also deacetylates EIF5A. Functions as a negative regulator on oxidative stress-tolerance in response to anoxia-reoxygenation conditions. Plays a role as tumor suppressor. In addition to protein deacetylase activity, also has activity toward long-chain fatty acyl groups and mediates protein-lysine demyristoylation and depalmitoylation of target proteins, such as ARF6 and KRAS, thereby regulating their association with membranes. Deacetylates EP300, alpha-tubulin and histone H3 and H4. Its function is as follows. Lacks deacetylation activity, at least toward known SIRT2 targets. The sequence is that of NAD-dependent protein deacetylase sirtuin-2 (SIRT2) from Homo sapiens (Human).